We begin with the raw amino-acid sequence, 87 residues long: Lantipeptide prochlorosin 3.3 (87 aa).

Positions 1-64 (MSEEQLKAFI…DEELEAASGG (64 aa)) are excised as a propeptide. Thr67 carries the 2,3-didehydrobutyrine modification. Residues 75–85 (TAGCYGGTKMC) constitute a cross-link (beta-methyllanthionine (Thr-Cys)). A cross-link (beta-methyllanthionine (Cys-Thr)) is located at residues 78–82 (CYGGT).

In terms of processing, cross-links are proved in vitro, when coepressed in E.coli with the ProcM lanthionine synthetase. Post-translationally, the beta-methyllanthionine residues have a DL configuration (with 2S,3S,6R stereochemistry). Maturation of prochlorosin involves the enzymatic conversion of Thr, and Ser into dehydrated AA and the formation of thioether bonds with cysteines. This is followed by membrane translocation and cleavage of the modified precursor.

It is found in the secreted. Lanthionine-containing peptide (lantipeptide) with unknown function. Does not show antibiotic activity against Lactococcus lactis 117 and Bacillus subtilis 6633 bacteria. Organisms that produce this peptide live in oligotrophic environments at very dilute concentrations, suggesting this peptide is not secreted to influence other bacteria. In Prochlorococcus marinus (strain MIT 9313), this protein is Lantipeptide prochlorosin 3.3.